The primary structure comprises 711 residues: Polyribonucleotide nucleotidyltransferase (711 aa).

Mg(2+) contacts are provided by aspartate 486 and aspartate 492. Residues proline 553 to isoleucine 612 form the KH domain. An S1 motif domain is found at glycine 622–lysine 690. The disordered stretch occupies residues glutamate 691 to glutamate 711. Positions alanine 699–glutamate 711 are enriched in low complexity.

Belongs to the polyribonucleotide nucleotidyltransferase family. Component of the RNA degradosome, which is a multiprotein complex involved in RNA processing and mRNA degradation. Mg(2+) serves as cofactor.

Its subcellular location is the cytoplasm. It catalyses the reaction RNA(n+1) + phosphate = RNA(n) + a ribonucleoside 5'-diphosphate. Involved in mRNA degradation. Catalyzes the phosphorolysis of single-stranded polyribonucleotides processively in the 3'- to 5'-direction. The sequence is that of Polyribonucleotide nucleotidyltransferase from Klebsiella pneumoniae (strain 342).